A 56-amino-acid chain; its full sequence is Large ribosomal subunit protein bL32 (56 aa).

The interval 1 to 40 is disordered; sequence MAVQQNKKSRSKRGMRRSHDSLGTAQLSVDATSGELHRRH. The span at 7-16 shows a compositional bias: basic residues; that stretch reads KKSRSKRGMR. A compositionally biased stretch (polar residues) spans 21–31; that stretch reads SLGTAQLSVDA.

It belongs to the bacterial ribosomal protein bL32 family.

This is Large ribosomal subunit protein bL32 from Shewanella halifaxensis (strain HAW-EB4).